We begin with the raw amino-acid sequence, 129 residues long: Prefoldin subunit 6 (129 aa).

Coiled-coil stretches lie at residues Val6 to Asp26 and Ile84 to Arg118.

This sequence belongs to the prefoldin subunit beta family. In terms of assembly, heterohexamer of two PFD-alpha type and four PFD-beta type subunits forming prefoldin co-chaperone complex. Interacts with PFD2, PFD3, PFD4 and PFD5. Interacts with LSM8, a specific subunit of the LSM2-8 complex, which is a core component of the spliceosome. Binds to HSP90 to facilitate the formation of a larger complex made at least of HSP90, PFD6 and LSM8.

It localises to the cytoplasm. The protein localises to the nucleus. Functionally, binds specifically to cytosolic chaperonin (c-CPN) and transfers target proteins to it. Binds to nascent polypeptide chain and promotes folding in an environment in which there are many competing pathways for nonnative proteins. Together with other chaperonins, contribute to the regulation of gene expression by modulating the spliceosome function on pre-mRNA splicing post-transcriptionally by acting as a co-chaperone of Hsp90 to control levels of LSM8. Required for the biogenesis of tubulins and for subsequent microtubules (MTs) organization and dynamicity, but unable to associate with microtubules. Involved in the process leading to microtubules dissociation in response to gibberellic acid (GA) probably due to the DELLA proteins-mediated translocation of the prefoldin co-chaperone complex from the cytoplasm to the nucleus. Contributes to the GA-dependent regulation of PIN2 trafficking at the plasma membrane, thus influencing auxin flux. The protein is Prefoldin subunit 6 of Arabidopsis thaliana (Mouse-ear cress).